The following is a 126-amino-acid chain: Small ribosomal subunit protein bS6 (126 aa).

The interval leucine 103–glutamate 126 is disordered. The segment covering leucine 115–glutamate 126 has biased composition (acidic residues).

This sequence belongs to the bacterial ribosomal protein bS6 family.

Functionally, binds together with bS18 to 16S ribosomal RNA. The protein is Small ribosomal subunit protein bS6 of Glaesserella parasuis serovar 5 (strain SH0165) (Haemophilus parasuis).